Reading from the N-terminus, the 195-residue chain is Thymidine kinase (195 aa).

Residues 15–22 (GSMFSGKS) and 88–91 (DEVQ) contribute to the ATP site. The active-site Proton acceptor is Glu89. 4 residues coordinate Zn(2+): Cys145, Cys148, Cys183, and Xaa186.

The protein belongs to the thymidine kinase family. In terms of assembly, homotetramer.

It is found in the cytoplasm. The enzyme catalyses thymidine + ATP = dTMP + ADP + H(+). This is Thymidine kinase from Bacillus cereus (strain ATCC 10987 / NRS 248).